Reading from the N-terminus, the 319-residue chain is GATA transcription factor 18 (319 aa).

Residues 1–15 (MPDAAAAAAAAQDAD) show a composition bias toward low complexity. The tract at residues 1–74 (MPDAAAAAAA…AAPEPVSALL (74 aa)) is disordered. Residues 32–60 (NNDDDGDDGTEEDEEEDDDEEGDEEELPP) are compositionally biased toward acidic residues. The 36-residue stretch at 74–109 (LPGSPNQLTLLFQGEVYVFESVTPEKVQAVLLLLGS) folds into the Tify domain. The CCT domain occupies 143–185 (RVASLIRFREKRKERNFDKKIRYAVRKEVALRMQRRKGQFAGR). A GATA-type zinc finger spans residues 215–242 (CQNCGTSEKMTPAMRRGPAGPRTLCNAC). A disordered region spans residues 292-319 (ITASHGEVMGDSTPANEAEIGAPKAQSQ).

It belongs to the type IV zinc-finger family. Class C subfamily.

It localises to the nucleus. Its function is as follows. Transcriptional activator that specifically binds 5'-GATA-3' or 5'-GAT-3' motifs within gene promoters. This is GATA transcription factor 18 from Oryza sativa subsp. indica (Rice).